Reading from the N-terminus, the 1054-residue chain is Translation initiation factor IF-2 (1054 aa).

Disordered stretches follow at residues 57 to 213 (DKRK…AASC), 225 to 248 (DPLA…NPGD), 287 to 315 (SGRP…HGLQ), and 401 to 436 (DHAG…KQEL). The span at 92–104 (QEPSQAASDVSSP) shows a compositional bias: polar residues. The segment covering 111 to 213 (EASGAEAAAS…VTSGRRAASC (103 aa)) has biased composition (low complexity). The span at 401 to 418 (DHAGRGRELVDVSKNKDK) shows a compositional bias: basic and acidic residues. The tr-type G domain maps to 552–721 (TRPPVVTVMG…VLQAEVLELT (170 aa)). Positions 561-568 (GHVDHGKT) are G1. A GTP-binding site is contributed by 561–568 (GHVDHGKT). The interval 586-590 (GITQH) is G2. Residues 607 to 610 (DTPG) form a G3 region. Residues 607–611 (DTPGH) and 661–664 (NKMD) each bind GTP. Residues 661 to 664 (NKMD) form a G4 region. Positions 697 to 699 (SAK) are G5.

This sequence belongs to the TRAFAC class translation factor GTPase superfamily. Classic translation factor GTPase family. IF-2 subfamily.

It is found in the cytoplasm. Functionally, one of the essential components for the initiation of protein synthesis. Protects formylmethionyl-tRNA from spontaneous hydrolysis and promotes its binding to the 30S ribosomal subunits. Also involved in the hydrolysis of GTP during the formation of the 70S ribosomal complex. This is Translation initiation factor IF-2 (infB) from Stigmatella aurantiaca.